Here is a 1186-residue protein sequence, read N- to C-terminus: DNA excision repair protein ERCC-5 (1186 aa).

Positions 1–78 (MGVQGLWKLL…RIRPIFVFDG (78 aa)) are N-domain. Lysine 8 carries the N6-acetyllysine modification. Mg(2+) is bound at residue aspartate 30. Positions 31–67 (ISIWLNQALKGVRDRHGNSIENPHLLTLFHRLCKLLF) are DNA-binding; may bind to the undamaged single-strand DNA of the DNA repair bubble. Residue aspartate 77 coordinates Mg(2+). The interval 79–785 (DAPLLKKQTL…LRLFGIPYIQ (707 aa)) is spacer region. 5 disordered regions span residues 306 to 342 (ESLPSSSKMHGMSFDVKSSPCEKLKTEKEPDATPPSP), 354 to 385 (GSSSEEELESENRRQARGRNAPAAVDEGSISP), 404 to 473 (CAGD…SVPK), 510 to 533 (HSDAPGLPNGRELTPASPTCTNSV), and 667 to 724 (QAEF…AEDS). Residues 325–336 (PCEKLKTEKEPD) show a composition bias toward basic and acidic residues. Phosphoserine is present on serine 384. The segment covering 454–472 (AEEHVASTNEGREPTDSVP) has biased composition (basic and acidic residues). At serine 705 the chain carries Phosphoserine. Residues 786–881 (APMEAEAQCA…VTAMEILNEF (96 aa)) form an I-domain region. The Mg(2+) site is built by glutamate 789, glutamate 791, aspartate 810, and aspartate 812. The interval 820-836 (HVYRNFFNKNKFVEYYQ) is DNA-binding; may bind to the undamaged single-strand DNA of the DNA repair bubble. The segment at 848–880 (RNKLINLAYLLGSDYTEGIPTVGCVTAMEILNE) is DNA-binding; H2TH (helix-2turn-helix) motif which binds double-stranded DNA. Aspartate 861 contributes to the Mg(2+) binding site. The interval 912 to 918 (TKVKKKL) is DNA-binding; may bind double-stranded DNA. Positions 981-1009 (LKQLDAQQTQLRIDSFFRLAQQEKEDAKR) are interaction with PCNA. The interaction with ERCC6/CSB stretch occupies residues 1011-1186 (KSQRLNRAVT…RRARGRKRKT (176 aa)). Disordered stretches follow at residues 1056 to 1081 (QKRGITNTLEESSSLKRKRLSDSKGK) and 1095 to 1186 (ESSD…KRKT). A Nuclear localization signal 1 motif is present at residues 1057–1074 (KRGITNTLEESSSLKRKR). Residues 1124–1133 (TSASDSQNSV) are compositionally biased toward polar residues. The Nuclear localization signal 2 motif lies at 1169–1186 (FGKKRRKLRRARGRKRKT). The segment covering 1169-1186 (FGKKRRKLRRARGRKRKT) has biased composition (basic residues).

Belongs to the XPG/RAD2 endonuclease family. XPG subfamily. As to quaternary structure, monomer. Homodimer. Component of the homologous recombination repair (HR) complex composed of ERCC5/XPG, BRCA2, PALB2, DSS1 and RAD51. Within the complex, interacts with BRCA2 and PALB2. Interacts with RNA polymerase II. Interacts (via C-terminus) with ERCC6/CSB; the interaction stimulates ERCC6/CSB binding to the DNA repair bubble and ERCC6/CSB ATPase activity. May form a complex composed of RNA polymerase II, ERCC6/CSB and ERCC5/XPG which associates with the DNA repair bubble during transcription-coupled nucleotide excision repair. Interacts with BRCA1; the interaction promotes the release of BRCA1 from DNA. Interacts with PCNA. Interacts with NTHL1; the interaction stimulates NTHL1 activity and NTHL1 binding to its DNA substrate. The cofactor is Mg(2+).

The protein resides in the nucleus. It localises to the chromosome. In terms of biological role, single-stranded structure-specific DNA endonuclease involved in DNA excision repair. Makes the 3'incision in DNA nucleotide excision repair (NER). Binds and bends DNA repair bubble substrate and breaks base stacking at the single-strand/double-strand DNA junction of the DNA bubble. Plays a role in base excision repair (BER) by promoting the binding of DNA glycosylase NTHL1 to its substrate and increasing NTHL1 catalytic activity that removes oxidized pyrimidines from DNA. Involved in transcription-coupled nucleotide excision repair (TCR) which allows RNA polymerase II-blocking lesions to be rapidly removed from the transcribed strand of active genes. Functions during the initial step of TCR in cooperation with ERCC6/CSB to recognized stalled RNA polymerase II. Also, stimulates ERCC6/CSB binding to the DNA repair bubble and ERCC6/CSB ATPase activity. Required for DNA replication fork maintenance and preservation of genomic stability. Involved in homologous recombination repair (HRR) induced by DNA replication stress by recruiting RAD51, BRCA2, and PALB2 to the damaged DNA site. In TFIIH stimulates the 5'-3' helicase activity of XPD/ERCC2 and the DNA translocase activity of XPB/ERCC3. During HRR, binds to the replication fork with high specificity and stabilizes it. Also, acts upstream of HRR, to promote the release of BRCA1 from DNA. In Homo sapiens (Human), this protein is DNA excision repair protein ERCC-5 (ERCC5).